Reading from the N-terminus, the 231-residue chain is Large ribosomal subunit protein uL1 (231 aa).

It belongs to the universal ribosomal protein uL1 family. In terms of assembly, part of the 50S ribosomal subunit.

Binds directly to 23S rRNA. The L1 stalk is quite mobile in the ribosome, and is involved in E site tRNA release. Functionally, protein L1 is also a translational repressor protein, it controls the translation of the L11 operon by binding to its mRNA. The protein is Large ribosomal subunit protein uL1 of Methylococcus capsulatus (strain ATCC 33009 / NCIMB 11132 / Bath).